The following is an 82-amino-acid chain: Sec-independent protein translocase protein TatA (82 aa).

The chain crosses the membrane as a helical span at residues 1–21 (MGIFDWKHWIVILIVVVLVFG). The segment at 43–82 (VNTEEDDKKDQPAAQPAQPLNQPHTIDAQAQKVEEPARKD) is disordered.

This sequence belongs to the TatA/E family. The Tat system comprises two distinct complexes: a TatABC complex, containing multiple copies of TatA, TatB and TatC subunits, and a separate TatA complex, containing only TatA subunits. Substrates initially bind to the TatABC complex, which probably triggers association of the separate TatA complex to form the active translocon.

The protein localises to the cell inner membrane. In terms of biological role, part of the twin-arginine translocation (Tat) system that transports large folded proteins containing a characteristic twin-arginine motif in their signal peptide across membranes. TatA could form the protein-conducting channel of the Tat system. This is Sec-independent protein translocase protein TatA from Pseudomonas aeruginosa (strain LESB58).